The sequence spans 105 residues: Iron-sulfur cluster assembly protein CyaY (105 aa).

The protein belongs to the frataxin family.

In terms of biological role, involved in iron-sulfur (Fe-S) cluster assembly. May act as a regulator of Fe-S biogenesis. This chain is Iron-sulfur cluster assembly protein CyaY, found in Paraburkholderia phymatum (strain DSM 17167 / CIP 108236 / LMG 21445 / STM815) (Burkholderia phymatum).